The sequence spans 267 residues: Glucosamine-6-phosphate deaminase (267 aa).

The active-site Proton acceptor; for enolization step is the aspartate 72. Catalysis depends on aspartate 141, which acts as the For ring-opening step. Catalysis depends on histidine 143, which acts as the Proton acceptor; for ring-opening step. The For ring-opening step role is filled by glutamate 148.

Belongs to the glucosamine/galactosamine-6-phosphate isomerase family. NagB subfamily. Homohexamer.

The enzyme catalyses alpha-D-glucosamine 6-phosphate + H2O = beta-D-fructose 6-phosphate + NH4(+). It functions in the pathway amino-sugar metabolism; N-acetylneuraminate degradation; D-fructose 6-phosphate from N-acetylneuraminate: step 5/5. Allosterically activated by N-acetylglucosamine 6-phosphate (GlcNAc6P). Its function is as follows. Catalyzes the reversible isomerization-deamination of glucosamine 6-phosphate (GlcN6P) to form fructose 6-phosphate (Fru6P) and ammonium ion. The chain is Glucosamine-6-phosphate deaminase from Actinobacillus pleuropneumoniae serotype 5b (strain L20).